A 244-amino-acid chain; its full sequence is uncharacterized protein (244 aa).

One can recognise an HTH gntR-type domain in the interval 7-74 (VKEKDQVVAH…YHRGAFIERF (68 aa)). Residues 34–53 (RNEIAHGLGVSRVPIQEALV) constitute a DNA-binding region (H-T-H motif).

This is an uncharacterized protein from Mycobacterium tuberculosis (strain CDC 1551 / Oshkosh).